Consider the following 217-residue polypeptide: MVHWEKHEGELSVVGVGAGSNDIWGVNHLGHIYHWDGHKWHKVDGELTNISVGHDGEVWGVNKNHNIYRLDRSNNKWTQIPGELVQVSVGSHHHVWGVNHLDHIYKWDHHHNKWDKIDGALTNVSVGKDGTVYGVNRGHQIYRWDGSKVDLVLGELVQIHVSDAEKIVGVNHLDHIYRLKHGKDWEKLDGELTWVSVGHHGEVWGVNKLHHIYKATL.

Tandem repeats lie at residues 2–37, 38–74, 75–111, 112–146, 147–182, and 183–217. The segment at 2 to 217 is 6 X approximate tandem repeats; that stretch reads VHWEKHEGEL…KLHHIYKATL (216 aa).

This sequence belongs to the tectonin family.

It localises to the cell surface. Its subcellular location is the cytoplasmic vesicle membrane. In terms of biological role, probably involved in bacterial recognition. May be a lectin that function as part of a transmembrane signaling complex during phagocytosis. The sequence is that of Tectonin-1 (TECA) from Physarum polycephalum (Slime mold).